Consider the following 802-residue polypeptide: Sucrose synthase 1 (802 aa).

The GT-B glycosyltransferase stretch occupies residues 272 to 749 (MMFNVVILSP…GLQRIYEKYT (478 aa)).

This sequence belongs to the glycosyltransferase 1 family. Plant sucrose synthase subfamily.

It catalyses the reaction an NDP-alpha-D-glucose + D-fructose = a ribonucleoside 5'-diphosphate + sucrose + H(+). In terms of biological role, sucrose-cleaving enzyme that provides UDP-glucose and fructose for various metabolic pathways. Most active in the sink tissues where it is responsible for the breakdown of the arriving sucrose. The sequence is that of Sucrose synthase 1 (SH-1) from Zea mays (Maize).